Here is a 558-residue protein sequence, read N- to C-terminus: V-set and immunoglobulin domain-containing protein 10 (558 aa).

An N-terminal signal peptide occupies residues Met1–Ala20. The Extracellular portion of the chain corresponds to Gly21–Asn426. N-linked (GlcNAc...) asparagine glycans are attached at residues Asn32, Asn60, Asn121, Asn150, Asn159, and Asn218. 4 consecutive Ig-like C2-type domains span residues Pro37–Val140, Pro144–Thr235, Pro248–Ser327, and Pro332–Ser420. Residues Cys65 and Cys124 are joined by a disulfide bond. Cystine bridges form between Cys174-Cys221 and Cys265-Cys308. Asn344 is a glycosylation site (N-linked (GlcNAc...) asparagine). A disulfide bridge connects residues Cys349 and Cys404. Residues Ile427 to Gly447 form a helical membrane-spanning segment. Residues Leu448–Val558 are Cytoplasmic-facing. The span at Asp477–Glu506 shows a compositional bias: acidic residues. 2 disordered regions span residues Asp477–His515 and Met532–Val558.

It localises to the membrane. In Mus musculus (Mouse), this protein is V-set and immunoglobulin domain-containing protein 10 (Vsig10).